The primary structure comprises 450 residues: Putative cysteine--tRNA ligase 2 (450 aa).

A 'HIGH' region motif is present at residues 29–39 (ITPYKSTHLGH). The 'KMSKS' region motif lies at 270 to 274 (KMSKS). Lysine 273 is an ATP binding site. Residues 372-392 (PIHPKHSPQMRDYSEHGSAGQ) are disordered.

Belongs to the class-I aminoacyl-tRNA synthetase family. In terms of assembly, monomer.

It localises to the cytoplasm. It carries out the reaction tRNA(Cys) + L-cysteine + ATP = L-cysteinyl-tRNA(Cys) + AMP + diphosphate. The protein is Putative cysteine--tRNA ligase 2 (cysS2) of Tropheryma whipplei (strain TW08/27) (Whipple's bacillus).